A 45-amino-acid chain; its full sequence is Temporin-SHf (45 aa).

The first 10 residues, F1–C10, serve as a signal peptide directing secretion. The propeptide occupies E11–R35. A Phenylalanine amide modification is found at F43.

This sequence belongs to the frog skin active peptide (FSAP) family. Temporin subfamily.

The protein resides in the secreted. It is found in the target cell membrane. In terms of biological role, non-amphipathic alpha-helical antimicrobial peptide with potent activity against some Gram-positive bacteria (including methicillin-resistant Staphylococcus aureus (MRSA)), weak activity against Gram-negative bacteria and no activity against fungi. Permeabilizates membranes through a detergent-like effect probably via the carpet mechanism. More precisely, it strongly and selectively perturbs anionic bilayers membranes by interacting with the polar headgroups and the glycerol backbone region of the phospholipids, hence disrupting the acyl chain packing of the bilayer. Is not active against Leishmania (promastigote and axenic amastigote forms). Does not show hemolytic activity. Does not show toxicity for human THP-1-derived macrophages. The chain is Temporin-SHf from Pelophylax saharicus (Sahara frog).